Consider the following 59-residue polypeptide: U-limacoditoxin(3)-Dv33 (59 aa).

Positions 1-19 (MSKVILLCLIFALFACSIS) are cleaved as a signal peptide.

This sequence belongs to the limacoditoxin-3 family. Post-translationally, the natural peptide is not amidated. The recombinant peptide is amidated. In terms of tissue distribution, expressed by the venom secretory cell of the spine. The spine is a cuticular structure containing a single large nucleated venom-secreting cell at its base. It is an independent unit capable of producing, storing and injecting venom. On the back of D.vulnerans caterpillars, spines are grouped together by 50 to 100 to form scoli, of which there are eight in D.vulnerans.

Its subcellular location is the secreted. Its function is as follows. Probable toxin. Shows a relatively potent antiparasitic activity against the major pathogenic nematode of ruminants (H.contortus, EC(50)=2.6 uM). Does not show insecticidal and antimicrobial activities. Does not induce increase in intracellular calcium in mouse DRG neurons, suggesting that it does not induce pain. The chain is U-limacoditoxin(3)-Dv33 from Doratifera vulnerans (Mottled cup moth).